The sequence spans 201 residues: ATP-dependent Clp protease proteolytic subunit (201 aa).

Ser98 acts as the Nucleophile in catalysis. His123 is a catalytic residue.

This sequence belongs to the peptidase S14 family. In terms of assembly, fourteen ClpP subunits assemble into 2 heptameric rings which stack back to back to give a disk-like structure with a central cavity, resembling the structure of eukaryotic proteasomes.

It is found in the cytoplasm. The enzyme catalyses Hydrolysis of proteins to small peptides in the presence of ATP and magnesium. alpha-casein is the usual test substrate. In the absence of ATP, only oligopeptides shorter than five residues are hydrolyzed (such as succinyl-Leu-Tyr-|-NHMec, and Leu-Tyr-Leu-|-Tyr-Trp, in which cleavage of the -Tyr-|-Leu- and -Tyr-|-Trp bonds also occurs).. Its function is as follows. Cleaves peptides in various proteins in a process that requires ATP hydrolysis. Has a chymotrypsin-like activity. Plays a major role in the degradation of misfolded proteins. The chain is ATP-dependent Clp protease proteolytic subunit from Rickettsia akari (strain Hartford).